Consider the following 530-residue polypeptide: Alpha-(1,3)-fucosyltransferase 4 (530 aa).

2 disordered regions span residues 1–48 (MRRL…RAVP) and 66–112 (HLGG…STPA). Residues 1-147 (MRRLWGAARK…GGRRGWRRGR (147 aa)) are Cytoplasmic-facing. Positions 88-106 (ASGERQRRLEPQLQHESRC) are enriched in basic and acidic residues. A helical; Signal-anchor for type II membrane protein membrane pass occupies residues 148 to 172 (GLPWTVCVLAAAGLTCTALITYACW). Residues 173–530 (GQLPPLPWAS…IRNLASWFER (358 aa)) are Lumenal-facing. N-linked (GlcNAc...) asparagine glycosylation is found at N216 and N315.

This sequence belongs to the glycosyltransferase 10 family. Expressed at low levels in bone marrow-derived mesenchymal stem cells. In terms of tissue distribution, expressed in cord blood immature promyelocytes and in peripheral blood myeloid and lymphoid cell populations.

The protein localises to the golgi apparatus. The protein resides in the golgi stack membrane. The enzyme catalyses a beta-D-galactosyl-(1-&gt;4)-N-acetyl-beta-D-glucosaminyl derivative + GDP-beta-L-fucose = a beta-D-galactosyl-(1-&gt;4)-[alpha-L-fucosyl-(1-&gt;3)]-N-acetyl-beta-D-glucosaminyl derivative + GDP + H(+). The catalysed reaction is an N-acetyl-alpha-neuraminyl-(2-&gt;3)-beta-D-galactosyl-(1-&gt;4)-N-acetyl-beta-D-glucosaminyl derivative + GDP-beta-L-fucose = an alpha-Neu5Ac-(2-&gt;3)-beta-D-Gal-(1-&gt;4)-[alpha-L-Fuc-(1-&gt;3)]-beta-D-GlcNAc derivative + GDP + H(+). It catalyses the reaction an alpha-Neu5Ac-(2-&gt;3)-beta-D-Gal-(1-&gt;4)-beta-D-GlcNAc-(1-&gt;3)-beta-D-Gal-(1-&gt;4)-beta-D-GlcNAc derivative + GDP-beta-L-fucose = an alpha-Neu5Ac-(2-&gt;3)-beta-D-Gal-(1-&gt;4)-beta-D-GlcNAc-(1-&gt;3)-beta-D-Gal-(1-&gt;4)-[alpha-L-Fuc-(1-&gt;3)]-beta-D-GlcNAc derivative + GDP + H(+). It carries out the reaction an alpha-Neu5Ac-(2-&gt;3)-beta-D-Gal-(1-&gt;4)-beta-D-GlcNAc6S derivative + GDP-beta-L-fucose = an alpha-Neu5Ac-(2-&gt;3)-beta-D-Gal-(1-&gt;4)-[alpha-L-Fuc-(1-&gt;3)]-beta-D-GlcNAc6S derivative + GDP + H(+). The protein operates within protein modification; protein glycosylation. Catalyzes alpha(1-&gt;3) linkage of fucosyl moiety transferred from GDP-beta-L-fucose to N-acetyl glucosamine (GlcNAc) within type 2 lactosamine (LacNAc, Gal-beta(1-&gt;4)GlcNAc) glycan attached to N- or O-linked glycoproteins. Robustly fucosylates nonsialylated distal LacNAc unit of the polylactosamine chain to form Lewis X antigen (CD15), a glycan determinant known to mediate important cellular functions in development and immunity. Fucosylates with lower efficiency sialylated LacNAc acceptors to form sialyl Lewis X and 6-sulfo sialyl Lewis X determinants that serve as recognition epitopes for C-type lectins. Together with FUT7 contributes to SELE, SELL and SELP selectin ligand biosynthesis and selectin-dependent lymphocyte homing, leukocyte migration and blood leukocyte homeostasis. In a cell type specific manner, may also fucosylate the internal LacNAc unit of the polylactosamine chain to form VIM-2 antigen that serves as recognition epitope for SELE. Functionally, does not generate Lewis X antigens. This chain is Alpha-(1,3)-fucosyltransferase 4, found in Homo sapiens (Human).